A 464-amino-acid chain; its full sequence is Trigger factor (464 aa).

The PPIase FKBP-type domain occupies 162-243 (GDFISIDLSA…VGTVKERELP (82 aa)). A disordered region spans residues 435–464 (ELFGNGEAETEEAASTDEAASDSTESEDQK).

The protein belongs to the FKBP-type PPIase family. Tig subfamily.

The protein localises to the cytoplasm. It catalyses the reaction [protein]-peptidylproline (omega=180) = [protein]-peptidylproline (omega=0). Functionally, involved in protein export. Acts as a chaperone by maintaining the newly synthesized protein in an open conformation. Functions as a peptidyl-prolyl cis-trans isomerase. This Rhodococcus jostii (strain RHA1) protein is Trigger factor.